The sequence spans 193 residues: 21 kDa protein (193 aa).

The first 22 residues, 1 to 22, serve as a signal peptide directing secretion; the sequence is MKLSKSTLVFSALLVILAAASA.

The sequence is that of 21 kDa protein from Daucus carota (Wild carrot).